The chain runs to 445 residues: Phosphoglucosamine mutase (445 aa).

Ser-102 functions as the Phosphoserine intermediate in the catalytic mechanism. Residues Ser-102, Asp-241, Asp-243, and Asp-245 each coordinate Mg(2+). Residue Ser-102 is modified to Phosphoserine.

This sequence belongs to the phosphohexose mutase family. The cofactor is Mg(2+). Activated by phosphorylation.

It carries out the reaction alpha-D-glucosamine 1-phosphate = D-glucosamine 6-phosphate. In terms of biological role, catalyzes the conversion of glucosamine-6-phosphate to glucosamine-1-phosphate. This chain is Phosphoglucosamine mutase, found in Shewanella sp. (strain ANA-3).